The chain runs to 86 residues: Cell division topological specificity factor (86 aa).

This sequence belongs to the MinE family.

Its function is as follows. Prevents the cell division inhibition by proteins MinC and MinD at internal division sites while permitting inhibition at polar sites. This ensures cell division at the proper site by restricting the formation of a division septum at the midpoint of the long axis of the cell. In Polaromonas sp. (strain JS666 / ATCC BAA-500), this protein is Cell division topological specificity factor.